The sequence spans 386 residues: Galactokinase (386 aa).

35–38 (EHTD) contributes to the substrate binding site. ATP is bound by residues serine 69 and 125–131 (GAGLSSS). Residues serine 131 and glutamate 163 each coordinate Mg(2+). The active-site Proton acceptor is aspartate 175. Tyrosine 224 is a binding site for substrate.

This sequence belongs to the GHMP kinase family. GalK subfamily.

The protein resides in the cytoplasm. It catalyses the reaction alpha-D-galactose + ATP = alpha-D-galactose 1-phosphate + ADP + H(+). The protein operates within carbohydrate metabolism; galactose metabolism. Its function is as follows. Catalyzes the transfer of the gamma-phosphate of ATP to D-galactose to form alpha-D-galactose-1-phosphate (Gal-1-P). The sequence is that of Galactokinase from Vibrio parahaemolyticus serotype O3:K6 (strain RIMD 2210633).